Consider the following 242-residue polypeptide: MSDTSLDSMRDLRAASCGPVGSPEVTTDLSENVILTSLDDLHNWARLSSLWPLLYGTACCFIEFAALIGSRFDFDRFGLVPRSSPRQADLLIVAGTVTMKMAPALVRLYEQMPEPKYVIAMGACTITGGMFSADSTTAVRGVDKLIPVDLYLPGCPPRPEAIFDAVIKLRKKVGDEAIAERGKLEQTHRYSTVEHRMTAVDPIVDGRYLRAETQQKALAAAEAVSPLNLAPAEQPETIPAKS.

[4Fe-4S] cluster contacts are provided by Cys59, Cys60, Cys124, and Cys155.

It belongs to the complex I 20 kDa subunit family. NDH-1 can be composed of about 15 different subunits; different subcomplexes with different compositions have been identified which probably have different functions. The cofactor is [4Fe-4S] cluster.

The protein localises to the cellular thylakoid membrane. It catalyses the reaction a plastoquinone + NADH + (n+1) H(+)(in) = a plastoquinol + NAD(+) + n H(+)(out). The enzyme catalyses a plastoquinone + NADPH + (n+1) H(+)(in) = a plastoquinol + NADP(+) + n H(+)(out). Functionally, NDH-1 shuttles electrons from an unknown electron donor, via FMN and iron-sulfur (Fe-S) centers, to quinones in the respiratory and/or the photosynthetic chain. The immediate electron acceptor for the enzyme in this species is believed to be plastoquinone. Couples the redox reaction to proton translocation, and thus conserves the redox energy in a proton gradient. Cyanobacterial NDH-1 also plays a role in inorganic carbon-concentration. This chain is NAD(P)H-quinone oxidoreductase subunit K, found in Synechococcus sp. (strain RCC307).